The sequence spans 262 residues: Type III pantothenate kinase (262 aa).

6-13 (DVGNTNAV) contributes to the ATP binding site. Residues Y100 and 107 to 110 (GADR) each bind substrate. The Proton acceptor role is filled by D109. D129 contributes to the K(+) binding site. T132 serves as a coordination point for ATP. T184 serves as a coordination point for substrate.

The protein belongs to the type III pantothenate kinase family. Homodimer. The cofactor is NH4(+). K(+) is required as a cofactor.

It localises to the cytoplasm. The enzyme catalyses (R)-pantothenate + ATP = (R)-4'-phosphopantothenate + ADP + H(+). It participates in cofactor biosynthesis; coenzyme A biosynthesis; CoA from (R)-pantothenate: step 1/5. In terms of biological role, catalyzes the phosphorylation of pantothenate (Pan), the first step in CoA biosynthesis. This Bacillus anthracis (strain A0248) protein is Type III pantothenate kinase.